Reading from the N-terminus, the 328-residue chain is Zinc transporter ZIP13 (328 aa).

At 1–7 (MPGCPCP) the chain is on the lumenal side. Residues 8–28 (GCGMAGPRLLFLTALALELLG) traverse the membrane as a helical segment. Residues 29–68 (RAGGSQPALRSRGTATACRLDNKESESWGALLSGERLDTW) are Cytoplasmic-facing. Residues 69–89 (ICSLLGSLMVGLSGVFPLLVI) traverse the membrane as a helical segment. The Lumenal portion of the chain corresponds to 90–108 (PLEMGTMLRSEAGAWHLKQ). Residues 109 to 129 (LLSFALGGLLGNVFLHLLPEA) traverse the membrane as a helical segment. Residues 130–149 (WAYTCSASPGGEGQSLQQQQ) are Cytoplasmic-facing. Residues 150 to 170 (QLGLWVIAGILTFLALEKMFL) traverse the membrane as a helical segment. Over 171 to 199 (DSKEEGTSQVSGYLNLLANTIDNFTHGLA) the chain is Lumenal. A helical membrane pass occupies residues 200–220 (VAASFLVSKKIGLLTTMAILL). The XEXPHE-motif motif lies at 221 to 226 (HEIPHE). Residues 221-242 (HEIPHEVGDFAILLRAGFDRWS) lie on the Cytoplasmic side of the membrane. Residues 243-263 (AAKLQLSTALGGLLGAGFAIC) traverse the membrane as a helical segment. Topologically, residues 264-273 (TQSPKGVEET) are lumenal. Residues 274-294 (AAWVLPFTSGGFLYIALVNVL) traverse the membrane as a helical segment. At 295–306 (PDLLEEEDPWRS) the chain is on the cytoplasmic side. A helical transmembrane segment spans residues 307–327 (LQQLLLLCAGIVVMVLFSLFV). Position 328 (Asp-328) is a topological domain, lumenal.

This sequence belongs to the ZIP transporter (TC 2.A.5) family. As to quaternary structure, homodimer.

Its subcellular location is the golgi apparatus membrane. The protein localises to the cytoplasmic vesicle membrane. The protein resides in the endoplasmic reticulum membrane. It catalyses the reaction Zn(2+)(in) = Zn(2+)(out). Its function is as follows. Functions as a zinc transporter transporting Zn(2+) from the Golgi apparatus to the cytosol and thus influences the zinc level at least in areas of the cytosol. May regulate beige adipocyte differentiation. The protein is Zinc transporter ZIP13 of Pongo abelii (Sumatran orangutan).